The chain runs to 277 residues: Large ribosomal subunit protein uL2 (277 aa).

A disordered region spans residues 211–277 (SRWKGVRPTV…KLIVRGRKKK (67 aa)).

The protein belongs to the universal ribosomal protein uL2 family. As to quaternary structure, part of the 50S ribosomal subunit. Forms a bridge to the 30S subunit in the 70S ribosome.

Functionally, one of the primary rRNA binding proteins. Required for association of the 30S and 50S subunits to form the 70S ribosome, for tRNA binding and peptide bond formation. It has been suggested to have peptidyltransferase activity; this is somewhat controversial. Makes several contacts with the 16S rRNA in the 70S ribosome. The polypeptide is Large ribosomal subunit protein uL2 (Staphylococcus epidermidis (strain ATCC 35984 / DSM 28319 / BCRC 17069 / CCUG 31568 / BM 3577 / RP62A)).